Here is a 279-residue protein sequence, read N- to C-terminus: Acyl-[acyl-carrier-protein]--UDP-N-acetylglucosamine O-acyltransferase (279 aa).

This sequence belongs to the transferase hexapeptide repeat family. LpxA subfamily. As to quaternary structure, homotrimer.

The protein resides in the cytoplasm. It carries out the reaction a (3R)-hydroxyacyl-[ACP] + UDP-N-acetyl-alpha-D-glucosamine = a UDP-3-O-[(3R)-3-hydroxyacyl]-N-acetyl-alpha-D-glucosamine + holo-[ACP]. Its pathway is glycolipid biosynthesis; lipid IV(A) biosynthesis; lipid IV(A) from (3R)-3-hydroxytetradecanoyl-[acyl-carrier-protein] and UDP-N-acetyl-alpha-D-glucosamine: step 1/6. Its function is as follows. Involved in the biosynthesis of lipid A, a phosphorylated glycolipid that anchors the lipopolysaccharide to the outer membrane of the cell. This is Acyl-[acyl-carrier-protein]--UDP-N-acetylglucosamine O-acyltransferase from Chlamydia pneumoniae (Chlamydophila pneumoniae).